A 689-amino-acid chain; its full sequence is Glycine--tRNA ligase beta subunit (689 aa).

Belongs to the class-II aminoacyl-tRNA synthetase family. In terms of assembly, tetramer of two alpha and two beta subunits.

The protein resides in the cytoplasm. It catalyses the reaction tRNA(Gly) + glycine + ATP = glycyl-tRNA(Gly) + AMP + diphosphate. The polypeptide is Glycine--tRNA ligase beta subunit (Sodalis glossinidius (strain morsitans)).